A 670-amino-acid chain; its full sequence is DNA ligase (670 aa).

NAD(+) is bound by residues 35 to 39 (DSVYD), 84 to 85 (SL), and Glu116. Lys118 (N6-AMP-lysine intermediate) is an active-site residue. NAD(+)-binding residues include Arg139, Glu176, Lys293, and Lys317. Cys411, Cys414, Cys429, and Cys435 together coordinate Zn(2+). The BRCT domain maps to 592 to 670 (VVKSEIAGKT…EEAFLKLLKS (79 aa)).

Belongs to the NAD-dependent DNA ligase family. LigA subfamily. Mg(2+) serves as cofactor. The cofactor is Mn(2+).

It catalyses the reaction NAD(+) + (deoxyribonucleotide)n-3'-hydroxyl + 5'-phospho-(deoxyribonucleotide)m = (deoxyribonucleotide)n+m + AMP + beta-nicotinamide D-nucleotide.. DNA ligase that catalyzes the formation of phosphodiester linkages between 5'-phosphoryl and 3'-hydroxyl groups in double-stranded DNA using NAD as a coenzyme and as the energy source for the reaction. It is essential for DNA replication and repair of damaged DNA. The polypeptide is DNA ligase (Coxiella burnetii (strain RSA 331 / Henzerling II)).